The chain runs to 222 residues: Superoxide dismutase [Mn], mitochondrial (222 aa).

A mitochondrion-targeting transit peptide spans 1 to 24 (MLSRAVCGTGRQLAPALGYLGSRQ). Histidine 50 provides a ligand contact to Mn(2+). Tyrosine 58 is subject to 3'-nitrotyrosine. 2 positions are modified to N6-acetyllysine; alternate: lysine 68 and lysine 75. N6-succinyllysine; alternate is present on residues lysine 68 and lysine 75. Mn(2+) is bound at residue histidine 98. An N6-acetyllysine modification is found at lysine 114. N6-acetyllysine; alternate is present on residues lysine 122 and lysine 130. Residues lysine 122 and lysine 130 each carry the N6-succinyllysine; alternate modification. Aspartate 183 and histidine 187 together coordinate Mn(2+). Lysine 202 carries the N6-acetyllysine modification.

The protein belongs to the iron/manganese superoxide dismutase family. Homotetramer. Mn(2+) serves as cofactor. Nitrated under oxidative stress. Nitration coupled with oxidation inhibits the catalytic activity. Post-translationally, acetylation at Lys-122 decreases enzymatic activity. Deacetylated by SIRT3 upon exposure to ionizing radiations or after long fasting. In terms of processing, polyubiquitinated; leading to proteasomal degradation. Deubiquitinated by USP36 which increases protein stability.

The protein resides in the mitochondrion matrix. The enzyme catalyses 2 superoxide + 2 H(+) = H2O2 + O2. In terms of biological role, destroys superoxide anion radicals which are normally produced within the cells and which are toxic to biological systems. The chain is Superoxide dismutase [Mn], mitochondrial (SOD2) from Macaca nemestrina (Pig-tailed macaque).